Here is a 444-residue protein sequence, read N- to C-terminus: Protein-serine O-palmitoleoyltransferase porcupine (444 aa).

The next 10 helical transmembrane spans lie at 29–49 (NGTL…FLVW), 81–101 (VMIF…KLNG), 128–150 (FLTL…FAIV), 163–183 (TLYL…YVTF), 201–221 (LGVF…AIIS), 249–269 (YFIC…IVVA), 304–324 (FFQS…LLHA), 326–346 (DYQM…ETVF), 383–403 (VLII…FTGM), and 420–440 (WTIW…FLAL). Histidine 323 is a catalytic residue.

Belongs to the membrane-bound acyltransferase family. Porcupine subfamily.

Its subcellular location is the membrane. It carries out the reaction [Wnt protein]-L-serine + (9Z)-hexadecenoyl-CoA = [Wnt protein]-O-(9Z)-hexadecenoyl-L-serine + CoA. Functionally, key regulator of the Wnt signaling pathway that mediates lipid modification of Wnt proteins. Acts as a protein-serine O-palmitoleoyltransferase that catalyzes the attachment of palmitoleate, a 16-carbon monounsaturated fatty acid (C16:1(9Z)), to Wnt proteins. Serine palmitoleoylation of WNT proteins is required for efficient binding to frizzled receptors. Has a role in cell specification, specifically in blastomere signaling. Involved in cytosketetal polarity. Required for the orientation of mitotic spindle axis. This chain is Protein-serine O-palmitoleoyltransferase porcupine, found in Caenorhabditis briggsae.